A 32-amino-acid polypeptide reads, in one-letter code: SLRGFLKGVGTALAGVGKVVADQFDKLLQAGQ.

Glutamine amide is present on Gln-32.

Expressed by the skin glands.

The protein resides in the secreted. In terms of biological role, antimicrobial peptide, active against the Gram-positive bacterium S.aureus, and the Gram-negative bacteriun E.coli. Has hemolytic activity at 432 uM. The polypeptide is Dermaseptin-8 (Phyllomedusa tarsius (Brownbelly leaf frog)).